The following is a 97-amino-acid chain: U-reduvitoxin-Pr11a (97 aa).

The signal sequence occupies residues 1–20 (MKTALFLVFALAFIAVEGKM). Pacifastin domains lie at 22 to 59 (RACS…CPPR) and 62 to 97 (EKSC…KLCL). 3 disulfides stabilise this stretch: C24/C42, C37/C56, and C40/C51. The segment at 57–59 (PPR) is pro-Pro-Arg motif necessary for proteolytic processing. Disulfide bonds link C65/C82, C77/C96, and C80/C91.

Belongs to the protease inhibitor I19 family. As to expression, expressed by the venom gland.

The protein resides in the secreted. Functionally, inhibits trypsin activity and prophenoloxidase (PPO) activation, an enzyme essential for both clotting and insect innate immune responses. It does not inhibit activity of chymotrypsin and protease K, and has no effect on phenoloxidase (PO) activity. This chain is U-reduvitoxin-Pr11a, found in Platymeris rhadamanthus (Red spot assassin bug).